The sequence spans 422 residues: Serine protease inhibitor A3A (422 aa).

The signal sequence occupies residues 1 to 17 (MAFIAALGLLMVGICPA). N218, N230, and N271 each carry an N-linked (GlcNAc...) asparagine glycan. Residues 369–394 (HTEADVITIARYNFQSAKIKAKIVKV) form an RCL region.

This sequence belongs to the serpin family.

The protein resides in the secreted. This chain is Serine protease inhibitor A3A (Serpina3a), found in Mus musculus (Mouse).